The chain runs to 875 residues: ATP-dependent helicase Lhr-Core (875 aa).

Positions 35, 58, 59, 173, 174, 355, 372, and 375 each coordinate ATP. Residues 39 to 230 (IPLIKQNYNV…FLVGKDREYR (192 aa)) enclose the Helicase ATP-binding domain. The short motif at 173–176 (DEIH) is the DEIH box element. Residues 247–419 (PVKDLVHSSE…SIHIPKNPLD (173 aa)) enclose the Helicase C-terminal domain. Positions 420–506 (VLSQIIVSAS…IFYTNSGTIP (87 aa)) are WH domain. Residues 507-875 (DEAMISVVTE…VNIELEYTSV (369 aa)) form a domain 4 region.

The protein belongs to the Lhr helicase family. Lhr-Core subfamily. In terms of assembly, monomer and homodimer. The monomeric form has helicase, ATPase and strand annealing activities, while the dimeric form only has ATPAse and strand annealing activities. Interacts with DNA topoisomerase 3 (topA).

It catalyses the reaction Couples ATP hydrolysis with the unwinding of duplex DNA by translocating in the 3'-5' direction.. The catalysed reaction is ATP + H2O = ADP + phosphate + H(+). DNA topoisomerase 3 (topA) inhibits helicase activity on Holliday junctions (HJ) but has no effect on ATPase activity. Its function is as follows. DNA helicase that translocates in a 3'-5' direction on single-stranded (ss)DNA, probably involved in DNA repair. Unwinds DNA in a 3'-5' direction, unwinding is ATP-dependent, acts preferentially on fork and 3'-tailed DNA; bubble and blunt-ended double-stranded (ds)DNA are not substrates. Has winding and unwinding activity, unwinds Holliday junction (HJ) DNA in the presence of ATP, the main product is forked DNA, single-stranded binding protein (SSB) does not stimulate activity. Anneals complementary oligonucleotides in an ATP-independent manner to form HJ and fork structures, thus can perform strand exchange. Preferentially binds HJ, forked and ssDNA, dsDNA is bound less well. LhrC-Core (Hel112) inhibits the exonuclease activity of the HerA-NurA complex on ss- and dsDNA, has no effect on ssDNA nicking by NurA; HerA-NurA are involved in DNA end-resection during DNA double-strand break repair. This chain is ATP-dependent helicase Lhr-Core, found in Saccharolobus solfataricus (strain ATCC 35092 / DSM 1617 / JCM 11322 / P2) (Sulfolobus solfataricus).